A 181-amino-acid polypeptide reads, in one-letter code: ATP synthase subunit delta (181 aa).

It belongs to the ATPase delta chain family. As to quaternary structure, F-type ATPases have 2 components, F(1) - the catalytic core - and F(0) - the membrane proton channel. F(1) has five subunits: alpha(3), beta(3), gamma(1), delta(1), epsilon(1). F(0) has three main subunits: a(1), b(2) and c(10-14). The alpha and beta chains form an alternating ring which encloses part of the gamma chain. F(1) is attached to F(0) by a central stalk formed by the gamma and epsilon chains, while a peripheral stalk is formed by the delta and b chains.

It localises to the cell inner membrane. In terms of biological role, f(1)F(0) ATP synthase produces ATP from ADP in the presence of a proton or sodium gradient. F-type ATPases consist of two structural domains, F(1) containing the extramembraneous catalytic core and F(0) containing the membrane proton channel, linked together by a central stalk and a peripheral stalk. During catalysis, ATP synthesis in the catalytic domain of F(1) is coupled via a rotary mechanism of the central stalk subunits to proton translocation. Functionally, this protein is part of the stalk that links CF(0) to CF(1). It either transmits conformational changes from CF(0) to CF(1) or is implicated in proton conduction. This is ATP synthase subunit delta from Chlorobaculum parvum (strain DSM 263 / NCIMB 8327) (Chlorobium vibrioforme subsp. thiosulfatophilum).